A 423-amino-acid chain; its full sequence is Progestin and adipoQ receptor-like protein 1 (423 aa).

Residues 1 to 201 (MDPDEVNQAL…KSIWSLHTET (201 aa)) are Cytoplasmic-facing. The segment at 54–140 (VVSPTNSDDE…DEDELEVDVK (87 aa)) is disordered. Residues 60–69 (SDDEEGEFCS) are compositionally biased toward acidic residues. The segment covering 104–114 (TVLRYRRKKGG) has biased composition (basic residues). Residues 202 to 222 (GNIWTHLIGCVAFFLLACWFL) form a helical membrane-spanning segment. The Extracellular portion of the chain corresponds to 223 to 234 (TRPDNHIQFQEK). Residues 235-252 (VVFSFFFAGAVSVSDSRS) form a helical membrane-spanning segment. Residues 253–288 (PSTPSRVIRSTSSRYSANSTIWESRCSLSARLFQPK) are Cytoplasmic-facing. The chain crosses the membrane as a helical span at residues 289–309 (ITYIAMVCVLGIGAIVVSLWD). The Extracellular segment spans residues 310 to 320 (KFSESKYRPVR). The helical transmembrane segment at 321-341 (AAVFVGMGCSGVIPTIHYIIT) threads the bilayer. Residues 342–351 (DGVHSLFADN) are Cytoplasmic-facing. The helical transmembrane segment at 352-372 (SFHWLLLMAFLYLLGAALYAT) threads the bilayer. Residues 373 to 392 (RTPERFFPGKCDIWFQSHQL) lie on the Extracellular side of the membrane. A helical transmembrane segment spans residues 393-413 (FHTCVVIAAFVHYYGISEMAF). The Cytoplasmic segment spans residues 414-423 (ARLNEQCPVR).

It belongs to the ADIPOR family.

Its subcellular location is the membrane. In terms of biological role, probable receptor, which may be involved in metabolic pathways that regulate lipid metabolism such as fatty acid oxidation. The sequence is that of Progestin and adipoQ receptor-like protein 1 from Caenorhabditis briggsae.